The primary structure comprises 383 residues: Chaperone protein DnaJ (383 aa).

Residues 4 to 68 (DLYETLNVSR…DQRARYDRFG (65 aa)) form the J domain. A CR-type zinc finger spans residues 139–221 (GGEKEITINH…CSGRGRNQKQ (83 aa)). Zn(2+)-binding residues include C152, C155, C169, C172, C195, C198, C209, and C212. 4 CXXCXGXG motif repeats span residues 152-159 (CETCRGSG), 169-176 (CRNCGGQG), 195-202 (CPNCQGTG), and 209-216 (CPTCSGRG).

The protein belongs to the DnaJ family. Homodimer. Zn(2+) is required as a cofactor.

The protein resides in the cytoplasm. Functionally, participates actively in the response to hyperosmotic and heat shock by preventing the aggregation of stress-denatured proteins and by disaggregating proteins, also in an autonomous, DnaK-independent fashion. Unfolded proteins bind initially to DnaJ; upon interaction with the DnaJ-bound protein, DnaK hydrolyzes its bound ATP, resulting in the formation of a stable complex. GrpE releases ADP from DnaK; ATP binding to DnaK triggers the release of the substrate protein, thus completing the reaction cycle. Several rounds of ATP-dependent interactions between DnaJ, DnaK and GrpE are required for fully efficient folding. Also involved, together with DnaK and GrpE, in the DNA replication of plasmids through activation of initiation proteins. The protein is Chaperone protein DnaJ of Gloeobacter violaceus (strain ATCC 29082 / PCC 7421).